The following is a 417-amino-acid chain: Probable glucuronosyltransferase GUT1 (417 aa).

Over 1–15 the chain is Cytoplasmic; it reads MGTRRRSARARARPP. A helical; Signal-anchor for type II membrane protein membrane pass occupies residues 16 to 36; sequence LAMPLAVLLLFACSSGVAAAA. Residues 37–417 are Lumenal-facing; it reads AQGIERIKDD…EGTREDLKPW (381 aa). Asn-144 and Asn-405 each carry an N-linked (GlcNAc...) asparagine glycan.

This sequence belongs to the glycosyltransferase 47 family.

It localises to the golgi apparatus membrane. Functionally, involved in the synthesis of glucuronoxylan hemicellulose in secondary cell walls. In Oryza sativa subsp. japonica (Rice), this protein is Probable glucuronosyltransferase GUT1 (GUT1).